The chain runs to 213 residues: MPKLMLALDVLDRDRALKIVEDVKDYVDAIKVGYPLVLSTGTEIIKEIKKLCNKEVIADFKVADIPATNEKIAKITLKYADGIIVHGFVGEDSVKAVQDVAKKLNKKVIMVTEMSHPGAVQFLQPIADKLSEMAKKLKVDAIVAPSTRPERLKEIKEIAELPVITPGVGAQGGKIEDILNILDENDYVIVGRAIYQSQNPKEEAKKYKEMLNK.

Substrate-binding positions include Asp9, Lys31, 59–68, Ser115, 166–176, Gly191, and Arg192; these read DFKVADIPAT and PGVGAQGGKIE. Residue Lys61 is the Proton donor of the active site.

It belongs to the OMP decarboxylase family. Type 1 subfamily. Homodimer.

It carries out the reaction orotidine 5'-phosphate + H(+) = UMP + CO2. It participates in pyrimidine metabolism; UMP biosynthesis via de novo pathway; UMP from orotate: step 2/2. Functionally, catalyzes the decarboxylation of orotidine 5'-monophosphate (OMP) to uridine 5'-monophosphate (UMP). This chain is Orotidine 5'-phosphate decarboxylase, found in Methanocaldococcus jannaschii (strain ATCC 43067 / DSM 2661 / JAL-1 / JCM 10045 / NBRC 100440) (Methanococcus jannaschii).